The chain runs to 166 residues: Large ribosomal subunit protein uL10 (166 aa).

The protein belongs to the universal ribosomal protein uL10 family. In terms of assembly, part of the ribosomal stalk of the 50S ribosomal subunit. The N-terminus interacts with L11 and the large rRNA to form the base of the stalk. The C-terminus forms an elongated spine to which L12 dimers bind in a sequential fashion forming a multimeric L10(L12)X complex.

Forms part of the ribosomal stalk, playing a central role in the interaction of the ribosome with GTP-bound translation factors. This Pseudomonas fluorescens (strain ATCC BAA-477 / NRRL B-23932 / Pf-5) protein is Large ribosomal subunit protein uL10.